Consider the following 264-residue polypeptide: Protein hob3 (264 aa).

Positions 17 to 237 (VMMKTGHVER…FDNSVREDYS (221 aa)) constitute a BAR domain. Coiled coils occupy residues 25–65 (ERTV…AMTA) and 165–187 (RTEKEAAMAKEVYETLNNQLVSE).

The protein resides in the cytoplasm. Its subcellular location is the cytoskeleton. Functionally, involved in cytokinesis and septation where it has a role in the localization of F-actin. The protein is Protein hob3 (hob3) of Schizosaccharomyces pombe (strain 972 / ATCC 24843) (Fission yeast).